A 309-amino-acid chain; its full sequence is Protein FdhE homolog (309 aa).

This sequence belongs to the FdhE family.

It localises to the cytoplasm. Functionally, necessary for formate dehydrogenase activity. This is Protein FdhE homolog from Pectobacterium atrosepticum (strain SCRI 1043 / ATCC BAA-672) (Erwinia carotovora subsp. atroseptica).